The primary structure comprises 213 residues: Peptidyl-tRNA hydrolase (213 aa).

Residue Tyr-26 coordinates tRNA. Residue His-31 is the Proton acceptor of the active site. TRNA is bound by residues Tyr-78, Asn-80, and Asn-126.

It belongs to the PTH family. Monomer.

The protein resides in the cytoplasm. The enzyme catalyses an N-acyl-L-alpha-aminoacyl-tRNA + H2O = an N-acyl-L-amino acid + a tRNA + H(+). Its function is as follows. Hydrolyzes ribosome-free peptidyl-tRNAs (with 1 or more amino acids incorporated), which drop off the ribosome during protein synthesis, or as a result of ribosome stalling. In terms of biological role, catalyzes the release of premature peptidyl moieties from peptidyl-tRNA molecules trapped in stalled 50S ribosomal subunits, and thus maintains levels of free tRNAs and 50S ribosomes. The protein is Peptidyl-tRNA hydrolase of Nostoc punctiforme (strain ATCC 29133 / PCC 73102).